The chain runs to 87 residues: Translation initiation factor IF-1 2 (87 aa).

In terms of domain architecture, S1-like spans 1 to 72 (MAKEELLELD…TKGRINFRHK (72 aa)).

It belongs to the IF-1 family. Component of the 30S ribosomal translation pre-initiation complex which assembles on the 30S ribosome in the order IF-2 and IF-3, IF-1 and N-formylmethionyl-tRNA(fMet); mRNA recruitment can occur at any time during PIC assembly.

It localises to the cytoplasm. Functionally, one of the essential components for the initiation of protein synthesis. Stabilizes the binding of IF-2 and IF-3 on the 30S subunit to which N-formylmethionyl-tRNA(fMet) subsequently binds. Helps modulate mRNA selection, yielding the 30S pre-initiation complex (PIC). Upon addition of the 50S ribosomal subunit IF-1, IF-2 and IF-3 are released leaving the mature 70S translation initiation complex. In Burkholderia vietnamiensis (strain G4 / LMG 22486) (Burkholderia cepacia (strain R1808)), this protein is Translation initiation factor IF-1 2.